Reading from the N-terminus, the 662-residue chain is MAPSQTANKKPRMTLAQVSAYDDILTDALVDHVFYWTTVPKNRTSYHPSRGVKEEEISKILQEEVVLKKDLDSAEKRLLTTNGLKRFHNGLKTDKEKDDFRKHLRRYVQIYLPDCPWEVSSTNRYTIVSHEAAVTARRAIRRNEAIKYLSGVQVVITPEEEMAISSQKKDFSIVVSSRSKCTSLFMGPARFANHDCDANAKLMRTSHAGIEIVATRPIDAGEEITVTYGDNYFGENNCECLCKTCEDLLRNAWEPEEGTVPVQTGIGQSLSDGYSLRRRRRDDSISGSSRTPSVTPDMRPRITKANSRGSLLARDTSSVRSPSIDQTSRKRTHDVLATPPKTPAKRQKLGVQPIVSDSSSRGTSVTASESSGAVETDVTSPEKETPEPMQTPLKGASKKQNNEQSRLAPVSPQSTEGSRSPQQKNGALSSNRSSLDTMSIQAILNDPLESEVESEPESKMKKVTVVPPPVEPVAPIATSIEAVEEGQAADAEQSKRKKQPRRVHKEDTPPARVRTPGDYLLTPLLLSEPEMAWIQCTNCDEYFVQQNAYFTRASCPRCERHSKLYGYIWPKTDKAGPNDKEERILDHRTIHRFLDPDNERRVRNRKSFGASKTNTEEAEDVERGRKRFGTAGLMGRNASTTEDSGHRRSGRLRRVNSRFLDP.

The SET domain maps to 115-229 (CPWEVSSTNR…AGEEITVTYG (115 aa)). Disordered regions lie at residues 260-437 (VPVQ…SLDT), 484-516 (EEGQ…VRTP), and 601-662 (RVRN…FLDP). 3 stretches are compositionally biased toward polar residues: residues 304–326 (KANS…SIDQ), 355–379 (VSDS…TDVT), and 398–437 (KKQN…SLDT). Over residues 647 to 656 (RRSGRLRRVN) the composition is skewed to basic residues.

This sequence belongs to the class V-like SAM-binding methyltransferase superfamily. Histone-lysine methyltransferase family. Suvar4-20 subfamily.

It localises to the nucleus. The protein resides in the chromosome. It catalyses the reaction L-lysyl(20)-[histone H4] + 3 S-adenosyl-L-methionine = N(6),N(6),N(6)-trimethyl-L-lysyl(20)-[histone H4] + 3 S-adenosyl-L-homocysteine + 3 H(+). Functionally, histone methyltransferase that trimethylates 'Lys-20' of histone H4 to form H4K20me3. The sequence is that of Histone-lysine N-methyltransferase SET9 (SET9) from Gibberella zeae (strain ATCC MYA-4620 / CBS 123657 / FGSC 9075 / NRRL 31084 / PH-1) (Wheat head blight fungus).